Consider the following 244-residue polypeptide: Rho-related GTP-binding protein RhoE (244 aa).

G30–T37 provides a ligand contact to GTP. An Effector region motif is present at residues Y52–Y60. GTP is bound by residues D77 to S81 and C135 to D138. Position 241 is a cysteine methyl ester (C241). A lipid anchor (S-farnesyl cysteine) is attached at C241. Residues T242–M244 constitute a propeptide, removed in mature form.

It belongs to the small GTPase superfamily. Rho family. Binds ROCK1. Interacts with UBXD5. As to expression, ubiquitous.

It localises to the golgi apparatus membrane. Functionally, binds GTP but lacks intrinsic GTPase activity and is resistant to Rho-specific GTPase-activating proteins. This chain is Rho-related GTP-binding protein RhoE (RND3), found in Homo sapiens (Human).